A 402-amino-acid chain; its full sequence is Adenylyltransferase and sulfurtransferase MOCS3 (402 aa).

ATP is bound by residues Gly-47, Asp-68, 75–79 (DNLHR), Lys-92, and 136–137 (DN). 2 residues coordinate Zn(2+): Cys-178 and Cys-181. Cys-195 serves as the catalytic Glycyl thioester intermediate; for adenylyltransferase activity. 2 residues coordinate Zn(2+): Cys-253 and Cys-256. Positions 303–400 (AARKQFLLDT…WALKINDEFP (98 aa)) constitute a Rhodanese domain. Cys-359 serves as the catalytic Cysteine persulfide intermediate; for sulfurtransferase activity.

This sequence in the N-terminal section; belongs to the HesA/MoeB/ThiF family. UBA4 subfamily. It depends on Zn(2+) as a cofactor.

It localises to the cytoplasm. Its subcellular location is the cytosol. It carries out the reaction [molybdopterin-synthase sulfur-carrier protein]-C-terminal Gly-Gly + ATP + H(+) = [molybdopterin-synthase sulfur-carrier protein]-C-terminal Gly-Gly-AMP + diphosphate. The catalysed reaction is [molybdopterin-synthase sulfur-carrier protein]-C-terminal Gly-Gly-AMP + S-sulfanyl-L-cysteinyl-[cysteine desulfurase] + AH2 = [molybdopterin-synthase sulfur-carrier protein]-C-terminal-Gly-aminoethanethioate + L-cysteinyl-[cysteine desulfurase] + A + AMP + 2 H(+). It functions in the pathway tRNA modification; 5-methoxycarbonylmethyl-2-thiouridine-tRNA biosynthesis. It participates in cofactor biosynthesis; molybdopterin biosynthesis. Functionally, plays a central role in 2-thiolation of mcm(5)S(2)U at tRNA wobble positions of cytosolic tRNA(Lys), tRNA(Glu) and tRNA(Gln). Also essential during biosynthesis of the molybdenum cofactor. Acts by mediating the C-terminal thiocarboxylation of sulfur carriers URM1 and MOCS2A. Its N-terminus first activates URM1 and MOCS2A as acyl-adenylates (-COAMP), then the persulfide sulfur on the catalytic cysteine is transferred to URM1 and MOCS2A to form thiocarboxylation (-COSH) of their C-terminus. The reaction probably involves hydrogen sulfide that is generated from the persulfide intermediate and that acts as a nucleophile towards URM1 and MOCS2A. Subsequently, a transient disulfide bond is formed. Does not use thiosulfate as sulfur donor; NFS1 probably acting as a sulfur donor for thiocarboxylation reactions. This chain is Adenylyltransferase and sulfurtransferase MOCS3, found in Caenorhabditis briggsae.